Consider the following 383-residue polypeptide: Acetylornithine deacetylase (383 aa).

His80 provides a ligand contact to Zn(2+). The active site involves Asp82. Asp112 contacts Zn(2+). The active site involves Glu144. 3 residues coordinate Zn(2+): Glu145, Glu169, and His355.

The protein belongs to the peptidase M20A family. ArgE subfamily. As to quaternary structure, homodimer. It depends on Zn(2+) as a cofactor. Requires Co(2+) as cofactor. Glutathione serves as cofactor.

Its subcellular location is the cytoplasm. It carries out the reaction N(2)-acetyl-L-ornithine + H2O = L-ornithine + acetate. Its pathway is amino-acid biosynthesis; L-arginine biosynthesis; L-ornithine from N(2)-acetyl-L-ornithine (linear): step 1/1. Its function is as follows. Catalyzes the hydrolysis of the amide bond of N(2)-acetylated L-amino acids. Cleaves the acetyl group from N-acetyl-L-ornithine to form L-ornithine, an intermediate in L-arginine biosynthesis pathway, and a branchpoint in the synthesis of polyamines. The chain is Acetylornithine deacetylase from Salmonella choleraesuis (strain SC-B67).